A 96-amino-acid chain; its full sequence is ATP-dependent Clp protease adapter protein ClpS (96 aa).

It belongs to the ClpS family. In terms of assembly, binds to the N-terminal domain of the chaperone ClpA.

Involved in the modulation of the specificity of the ClpAP-mediated ATP-dependent protein degradation. The polypeptide is ATP-dependent Clp protease adapter protein ClpS (Campylobacter jejuni subsp. doylei (strain ATCC BAA-1458 / RM4099 / 269.97)).